The primary structure comprises 304 residues: ATP phosphoribosyltransferase (304 aa).

This sequence belongs to the ATP phosphoribosyltransferase family. Long subfamily. Mg(2+) is required as a cofactor.

The protein resides in the cytoplasm. The catalysed reaction is 1-(5-phospho-beta-D-ribosyl)-ATP + diphosphate = 5-phospho-alpha-D-ribose 1-diphosphate + ATP. It participates in amino-acid biosynthesis; L-histidine biosynthesis; L-histidine from 5-phospho-alpha-D-ribose 1-diphosphate: step 1/9. Its activity is regulated as follows. Feedback inhibited by histidine. Functionally, catalyzes the condensation of ATP and 5-phosphoribose 1-diphosphate to form N'-(5'-phosphoribosyl)-ATP (PR-ATP). Has a crucial role in the pathway because the rate of histidine biosynthesis seems to be controlled primarily by regulation of HisG enzymatic activity. The chain is ATP phosphoribosyltransferase from Xanthomonas campestris pv. campestris (strain B100).